A 376-amino-acid polypeptide reads, in one-letter code: Copper-containing nitrite reductase (376 aa).

The tat-type signal signal peptide spans 1–33 (MAEQMQISRRTILAGAALAGALAPVLATTSAWG). Q34 is subject to Pyrrolidone carboxylic acid. Plastocyanin-like domains are found at residues 34–211 (QGAV…YDKI) and 212–376 (YYVG…PSGT). Cu cation contacts are provided by H131, H136, H171, C172, H181, M186, and H342.

Belongs to the multicopper oxidase family. In terms of assembly, homotrimer. The cofactor is Cu(2+). It depends on Cu(+) as a cofactor. FAD is required as a cofactor. Predicted to be exported by the Tat system. The position of the signal peptide cleavage has been experimentally proven.

It is found in the periplasm. It carries out the reaction nitric oxide + Fe(III)-[cytochrome c] + H2O = Fe(II)-[cytochrome c] + nitrite + 2 H(+). It participates in nitrogen metabolism; nitrate reduction (denitrification); dinitrogen from nitrate: step 2/4. This chain is Copper-containing nitrite reductase (nirK), found in Alcaligenes faecalis.